Here is a 122-residue protein sequence, read N- to C-terminus: Small ribosomal subunit protein uS13 (122 aa).

The interval 99–122 is disordered; that stretch reads RGQRTHTNARTRKGPAKAIAGKKK.

This sequence belongs to the universal ribosomal protein uS13 family. Part of the 30S ribosomal subunit. Forms a loose heterodimer with protein S19. Forms two bridges to the 50S subunit in the 70S ribosome.

In terms of biological role, located at the top of the head of the 30S subunit, it contacts several helices of the 16S rRNA. In the 70S ribosome it contacts the 23S rRNA (bridge B1a) and protein L5 of the 50S subunit (bridge B1b), connecting the 2 subunits; these bridges are implicated in subunit movement. Contacts the tRNAs in the A and P-sites. This is Small ribosomal subunit protein uS13 from Rhodopseudomonas palustris (strain BisB5).